The chain runs to 157 residues: 2-C-methyl-D-erythritol 2,4-cyclodiphosphate synthase (157 aa).

A divalent metal cation is bound by residues D8 and H10. 4-CDP-2-C-methyl-D-erythritol 2-phosphate is bound by residues 8-10 (DVH) and 34-35 (HS). H42 provides a ligand contact to a divalent metal cation. 4-CDP-2-C-methyl-D-erythritol 2-phosphate-binding positions include 56–58 (DIG), 61–65 (FPDTD), 132–135 (TTTE), F139, and R142.

This sequence belongs to the IspF family. As to quaternary structure, homotrimer. It depends on a divalent metal cation as a cofactor.

The enzyme catalyses 4-CDP-2-C-methyl-D-erythritol 2-phosphate = 2-C-methyl-D-erythritol 2,4-cyclic diphosphate + CMP. It participates in isoprenoid biosynthesis; isopentenyl diphosphate biosynthesis via DXP pathway; isopentenyl diphosphate from 1-deoxy-D-xylulose 5-phosphate: step 4/6. Its function is as follows. Involved in the biosynthesis of isopentenyl diphosphate (IPP) and dimethylallyl diphosphate (DMAPP), two major building blocks of isoprenoid compounds. Catalyzes the conversion of 4-diphosphocytidyl-2-C-methyl-D-erythritol 2-phosphate (CDP-ME2P) to 2-C-methyl-D-erythritol 2,4-cyclodiphosphate (ME-CPP) with a corresponding release of cytidine 5-monophosphate (CMP). The protein is 2-C-methyl-D-erythritol 2,4-cyclodiphosphate synthase of Geotalea uraniireducens (strain Rf4) (Geobacter uraniireducens).